The following is a 493-amino-acid chain: Glutamate--tRNA ligase (493 aa).

The 'HIGH' region signature appears at 10–20 (PSPTGDPHVGT). Residues 251-255 (KLSKR) carry the 'KMSKS' region motif. K254 serves as a coordination point for ATP.

It belongs to the class-I aminoacyl-tRNA synthetase family. Glutamate--tRNA ligase type 1 subfamily. In terms of assembly, monomer.

It localises to the cytoplasm. The enzyme catalyses tRNA(Glu) + L-glutamate + ATP = L-glutamyl-tRNA(Glu) + AMP + diphosphate. Its function is as follows. Catalyzes the attachment of glutamate to tRNA(Glu) in a two-step reaction: glutamate is first activated by ATP to form Glu-AMP and then transferred to the acceptor end of tRNA(Glu). The chain is Glutamate--tRNA ligase from Marinomonas sp. (strain MWYL1).